Here is an 85-residue protein sequence, read N- to C-terminus: Large ribosomal subunit protein bL27 (85 aa).

Over residues Met1–Gly13 the composition is skewed to polar residues. Residues Met1 to Gly26 form a disordered region.

It belongs to the bacterial ribosomal protein bL27 family.

The chain is Large ribosomal subunit protein bL27 from Mycoplasma mobile (strain ATCC 43663 / 163K / NCTC 11711) (Mesomycoplasma mobile).